Consider the following 190-residue polypeptide: Elongation factor P-like protein (190 aa).

The protein belongs to the elongation factor P family.

The sequence is that of Elongation factor P-like protein from Shigella dysenteriae serotype 1 (strain Sd197).